We begin with the raw amino-acid sequence, 174 residues long: Co-chaperone protein HscB (174 aa).

The region spanning 2-74 is the J domain; the sequence is DYFTLFGLPA…LKRAEYMLSL (73 aa).

This sequence belongs to the HscB family. Interacts with HscA and stimulates its ATPase activity. Interacts with IscU.

Functionally, co-chaperone involved in the maturation of iron-sulfur cluster-containing proteins. Seems to help targeting proteins to be folded toward HscA. In Yersinia pseudotuberculosis serotype O:1b (strain IP 31758), this protein is Co-chaperone protein HscB.